The sequence spans 582 residues: Potassium-transporting ATPase potassium-binding subunit (582 aa).

Transmembrane regions (helical) follow at residues A11–V31, L81–F101, F148–F168, L195–I215, V272–V292, G298–V318, A379–G399, G401–G421, V439–V459, and G551–F571.

This sequence belongs to the KdpA family. In terms of assembly, the system is composed of three essential subunits: KdpA, KdpB and KdpC.

Its subcellular location is the cell membrane. Its function is as follows. Part of the high-affinity ATP-driven potassium transport (or Kdp) system, which catalyzes the hydrolysis of ATP coupled with the electrogenic transport of potassium into the cytoplasm. This subunit binds the extracellular potassium ions and delivers the ions to the membrane domain of KdpB through an intramembrane tunnel. The chain is Potassium-transporting ATPase potassium-binding subunit from Halobacterium salinarum (strain ATCC 700922 / JCM 11081 / NRC-1) (Halobacterium halobium).